Reading from the N-terminus, the 251-residue chain is CDP-diacylglycerol pyrophosphatase (251 aa).

Residues alanine 4–tryptophan 24 form a helical membrane-spanning segment.

This sequence belongs to the Cdh family.

It localises to the cell inner membrane. The enzyme catalyses a CDP-1,2-diacyl-sn-glycerol + H2O = a 1,2-diacyl-sn-glycero-3-phosphate + CMP + 2 H(+). It functions in the pathway phospholipid metabolism; CDP-diacylglycerol degradation; phosphatidate from CDP-diacylglycerol: step 1/1. The sequence is that of CDP-diacylglycerol pyrophosphatase from Shigella flexneri.